A 103-amino-acid chain; its full sequence is N(4)-acetylcytidine amidohydrolase (103 aa).

The ASCH domain occupies 6 to 101; it reads ITFSQRFQDD…QTQFYVIEFK (96 aa). Lys-21 (proton acceptor) is an active-site residue. The active-site Nucleophile is Thr-24. Glu-74 acts as the Proton donor in catalysis.

This sequence belongs to the N(4)-acetylcytidine amidohydrolase family.

It carries out the reaction N(4)-acetylcytidine + H2O = cytidine + acetate + H(+). The enzyme catalyses N(4)-acetyl-2'-deoxycytidine + H2O = 2'-deoxycytidine + acetate + H(+). It catalyses the reaction N(4)-acetylcytosine + H2O = cytosine + acetate + H(+). In terms of biological role, catalyzes the hydrolysis of N(4)-acetylcytidine (ac4C). In Shigella boydii serotype 4 (strain Sb227), this protein is N(4)-acetylcytidine amidohydrolase (yqfB).